The primary structure comprises 525 residues: Bifunctional purine biosynthesis protein PurH (525 aa).

In terms of domain architecture, MGS-like spans 1–149; that stretch reads MSDPVIKRAL…KNHESVTVIT (149 aa).

This sequence belongs to the PurH family.

It carries out the reaction (6R)-10-formyltetrahydrofolate + 5-amino-1-(5-phospho-beta-D-ribosyl)imidazole-4-carboxamide = 5-formamido-1-(5-phospho-D-ribosyl)imidazole-4-carboxamide + (6S)-5,6,7,8-tetrahydrofolate. The enzyme catalyses IMP + H2O = 5-formamido-1-(5-phospho-D-ribosyl)imidazole-4-carboxamide. It participates in purine metabolism; IMP biosynthesis via de novo pathway; 5-formamido-1-(5-phospho-D-ribosyl)imidazole-4-carboxamide from 5-amino-1-(5-phospho-D-ribosyl)imidazole-4-carboxamide (10-formyl THF route): step 1/1. Its pathway is purine metabolism; IMP biosynthesis via de novo pathway; IMP from 5-formamido-1-(5-phospho-D-ribosyl)imidazole-4-carboxamide: step 1/1. The protein is Bifunctional purine biosynthesis protein PurH of Chlorobium phaeobacteroides (strain BS1).